We begin with the raw amino-acid sequence, 104 residues long: NADH-quinone oxidoreductase subunit K (104 aa).

3 helical membrane passes run 4-24 (VPASAYLTLAIILFCIGLFGA), 31-51 (VIVLVCIELMLNAANLNLVAF), and 67-87 (LFTMAVAAAEAALGLAILIAL).

The protein belongs to the complex I subunit 4L family. NDH-1 is composed of 14 different subunits. Subunits NuoA, H, J, K, L, M, N constitute the membrane sector of the complex.

It is found in the cell membrane. The enzyme catalyses a quinone + NADH + 5 H(+)(in) = a quinol + NAD(+) + 4 H(+)(out). Functionally, NDH-1 shuttles electrons from NADH, via FMN and iron-sulfur (Fe-S) centers, to quinones in the respiratory chain. The immediate electron acceptor for the enzyme in this species is believed to be a menaquinone. Couples the redox reaction to proton translocation (for every two electrons transferred, four hydrogen ions are translocated across the cytoplasmic membrane), and thus conserves the redox energy in a proton gradient. In Bacillus cereus (strain ATCC 14579 / DSM 31 / CCUG 7414 / JCM 2152 / NBRC 15305 / NCIMB 9373 / NCTC 2599 / NRRL B-3711), this protein is NADH-quinone oxidoreductase subunit K.